We begin with the raw amino-acid sequence, 239 residues long: Pyridoxine 5'-phosphate synthase (239 aa).

Position 7 (N7) interacts with 3-amino-2-oxopropyl phosphate. 9 to 10 (DH) lines the 1-deoxy-D-xylulose 5-phosphate pocket. R18 is a binding site for 3-amino-2-oxopropyl phosphate. Catalysis depends on H43, which acts as the Proton acceptor. Residues R45 and H50 each contribute to the 1-deoxy-D-xylulose 5-phosphate site. E70 functions as the Proton acceptor in the catalytic mechanism. T100 is a 1-deoxy-D-xylulose 5-phosphate binding site. Catalysis depends on H191, which acts as the Proton donor. Residues G192 and 213–214 (GH) contribute to the 3-amino-2-oxopropyl phosphate site.

It belongs to the PNP synthase family. Homooctamer; tetramer of dimers.

The protein localises to the cytoplasm. It catalyses the reaction 3-amino-2-oxopropyl phosphate + 1-deoxy-D-xylulose 5-phosphate = pyridoxine 5'-phosphate + phosphate + 2 H2O + H(+). It functions in the pathway cofactor biosynthesis; pyridoxine 5'-phosphate biosynthesis; pyridoxine 5'-phosphate from D-erythrose 4-phosphate: step 5/5. Functionally, catalyzes the complicated ring closure reaction between the two acyclic compounds 1-deoxy-D-xylulose-5-phosphate (DXP) and 3-amino-2-oxopropyl phosphate (1-amino-acetone-3-phosphate or AAP) to form pyridoxine 5'-phosphate (PNP) and inorganic phosphate. The sequence is that of Pyridoxine 5'-phosphate synthase from Nostoc sp. (strain PCC 7120 / SAG 25.82 / UTEX 2576).